Here is a 318-residue protein sequence, read N- to C-terminus: Mitochondrial thiamine pyrophosphate carrier (318 aa).

3 Solcar repeats span residues 13–106 (NSKL…LTEL), 116–202 (HQFS…LKRA), and 214–309 (TGNL…FCNL). Transmembrane regions (helical) follow at residues 19–39 (AVAG…LDVI), 87–107 (ILSI…TELL), 122–142 (FVCG…VDVL), 173–193 (VFYK…GLQF), 220–240 (LLCG…LDLF), and 293–313 (ALST…FHCI).

This sequence belongs to the mitochondrial carrier (TC 2.A.29) family.

It is found in the mitochondrion membrane. The catalysed reaction is thiamine phosphate(out) + thiamine diphosphate(in) = thiamine phosphate(in) + thiamine diphosphate(out). In terms of biological role, mitochondrial transporter mediating uptake of thiamine diphosphate into mitochondria. It is not clear if the antiporter activity is affected by the membrane potential or by the proton electrochemical gradient. The protein is Mitochondrial thiamine pyrophosphate carrier (Slc25a19) of Rattus norvegicus (Rat).